Consider the following 217-residue polypeptide: Cytochrome c biogenesis ATP-binding export protein CcmA (217 aa).

In terms of domain architecture, ABC transporter spans 6-216 (LQLEQLACQR…QYKFFDQGNM (211 aa)). 38–45 (GHNGIGKT) is an ATP binding site.

Belongs to the ABC transporter superfamily. CcmA exporter (TC 3.A.1.107) family. As to quaternary structure, the complex is composed of two ATP-binding proteins (CcmA) and two transmembrane proteins (CcmB).

It localises to the cell inner membrane. It catalyses the reaction heme b(in) + ATP + H2O = heme b(out) + ADP + phosphate + H(+). Part of the ABC transporter complex CcmAB involved in the biogenesis of c-type cytochromes; once thought to export heme, this seems not to be the case, but its exact role is uncertain. Responsible for energy coupling to the transport system. In Histophilus somni (strain 129Pt) (Haemophilus somnus), this protein is Cytochrome c biogenesis ATP-binding export protein CcmA.